The following is a 62-amino-acid chain: Large ribosomal subunit protein bL28 (62 aa).

Belongs to the bacterial ribosomal protein bL28 family.

This is Large ribosomal subunit protein bL28 from Ruminiclostridium cellulolyticum (strain ATCC 35319 / DSM 5812 / JCM 6584 / H10) (Clostridium cellulolyticum).